The following is a 135-amino-acid chain: Protein PsiE homolog (135 aa).

Helical transmembrane passes span 20–40, 54–74, 82–102, and 107–127; these read VGLLLLAAILIVFLVKETIHL, YLLIEGIVIYFLYFEFIALIV, HFPLRYFIYIGITAIIRLIIV, and PIDTLIYSAAILLLVVTLYLA.

Belongs to the PsiE family.

The protein resides in the cell inner membrane. In Serratia proteamaculans (strain 568), this protein is Protein PsiE homolog.